Consider the following 150-residue polypeptide: Cytochrome c oxidase subunit 5A, mitochondrial (150 aa).

The transit peptide at 1-41 (MLGTALRRCAVAAASRAGPRGLQHPAPVPGPTAAIQSIRCY) directs the protein to the mitochondrion. Positions 2–17 (LGTALRRCAVAAASRA) match the SIFI-degron motif. Residues K87 and K113 each carry the N6-acetyllysine modification. T141 is subject to Phosphothreonine.

This sequence belongs to the cytochrome c oxidase subunit 5A family. Component of the cytochrome c oxidase (complex IV, CIV), a multisubunit enzyme composed of 14 subunits. The complex is composed of a catalytic core of 3 subunits MT-CO1, MT-CO2 and MT-CO3, encoded in the mitochondrial DNA, and 11 supernumerary subunits COX4I, COX5A, COX5B, COX6A, COX6B, COX6C, COX7A, COX7B, COX7C, COX8 and NDUFA4, which are encoded in the nuclear genome. The complex exists as a monomer or a dimer and forms supercomplexes (SCs) in the inner mitochondrial membrane with NADH-ubiquinone oxidoreductase (complex I, CI) and ubiquinol-cytochrome c oxidoreductase (cytochrome b-c1 complex, complex III, CIII), resulting in different assemblies (supercomplex SCI(1)III(2)IV(1) and megacomplex MCI(2)III(2)IV(2)). Interacts with AFG1L. Interacts with RAB5IF. Post-translationally, in response to mitochondrial stress, the precursor protein is ubiquitinated by the SIFI complex in the cytoplasm before mitochondrial import, leading to its degradation. Within the SIFI complex, UBR4 initiates ubiquitin chain that are further elongated or branched by KCMF1.

The protein resides in the mitochondrion inner membrane. Its pathway is energy metabolism; oxidative phosphorylation. Its function is as follows. Component of the cytochrome c oxidase, the last enzyme in the mitochondrial electron transport chain which drives oxidative phosphorylation. The respiratory chain contains 3 multisubunit complexes succinate dehydrogenase (complex II, CII), ubiquinol-cytochrome c oxidoreductase (cytochrome b-c1 complex, complex III, CIII) and cytochrome c oxidase (complex IV, CIV), that cooperate to transfer electrons derived from NADH and succinate to molecular oxygen, creating an electrochemical gradient over the inner membrane that drives transmembrane transport and the ATP synthase. Cytochrome c oxidase is the component of the respiratory chain that catalyzes the reduction of oxygen to water. Electrons originating from reduced cytochrome c in the intermembrane space (IMS) are transferred via the dinuclear copper A center (CU(A)) of subunit 2 and heme A of subunit 1 to the active site in subunit 1, a binuclear center (BNC) formed by heme A3 and copper B (CU(B)). The BNC reduces molecular oxygen to 2 water molecules using 4 electrons from cytochrome c in the IMS and 4 protons from the mitochondrial matrix. The polypeptide is Cytochrome c oxidase subunit 5A, mitochondrial (COX5A) (Nycticebus coucang (Slow loris)).